Reading from the N-terminus, the 538-residue chain is Chaperonin GroEL (538 aa).

ATP contacts are provided by residues 29 to 32 (TIGP), 86 to 90 (DGTTT), glycine 413, 476 to 478 (NAA), and aspartate 492.

It belongs to the chaperonin (HSP60) family. As to quaternary structure, forms a cylinder of 14 subunits composed of two heptameric rings stacked back-to-back. Interacts with the co-chaperonin GroES.

Its subcellular location is the cytoplasm. The enzyme catalyses ATP + H2O + a folded polypeptide = ADP + phosphate + an unfolded polypeptide.. Its function is as follows. Together with its co-chaperonin GroES, plays an essential role in assisting protein folding. The GroEL-GroES system forms a nano-cage that allows encapsulation of the non-native substrate proteins and provides a physical environment optimized to promote and accelerate protein folding. The chain is Chaperonin GroEL from Staphylococcus aureus (strain NCTC 8325 / PS 47).